We begin with the raw amino-acid sequence, 349 residues long: Cobalt-precorrin-5B C(1)-methyltransferase (349 aa).

It belongs to the CbiD family.

It carries out the reaction Co-precorrin-5B + S-adenosyl-L-methionine = Co-precorrin-6A + S-adenosyl-L-homocysteine. It functions in the pathway cofactor biosynthesis; adenosylcobalamin biosynthesis; cob(II)yrinate a,c-diamide from sirohydrochlorin (anaerobic route): step 6/10. Catalyzes the methylation of C-1 in cobalt-precorrin-5B to form cobalt-precorrin-6A. The polypeptide is Cobalt-precorrin-5B C(1)-methyltransferase (Saccharolobus islandicus (strain L.S.2.15 / Lassen #1) (Sulfolobus islandicus)).